The primary structure comprises 226 residues: MMIHIPKVLTPEQVARCRAVMDAAGWVDGRSTAGAQAVHVKKNLQLPDGSAEARELGEMVRAALQRSALFTSAVLPRRILPPMFNRYDAGMTFGSHVDNAIRFVRDSGEPLRTDVSTTLFLSEPDEYEGGELVVEDTYGAHKVKLPAGDAIVYPATSLHHVTPITRGSRVASFFWTQSLIRDAGQRALLFDMDMAIMRLNQDHPGHISAVQLTGVYHNLLRQWAEV.

The 101-residue stretch at 78 to 178 (RILPPMFNRY…RVASFFWTQS (101 aa)) folds into the Fe2OG dioxygenase domain. 3 residues coordinate Fe cation: His-96, Asp-98, and His-159. Arg-169 contributes to the 2-oxoglutarate binding site.

Fe(2+) serves as cofactor. L-ascorbate is required as a cofactor.

The chain is PKHD-type hydroxylase AZC_3753 from Azorhizobium caulinodans (strain ATCC 43989 / DSM 5975 / JCM 20966 / LMG 6465 / NBRC 14845 / NCIMB 13405 / ORS 571).